The chain runs to 62 residues: uncharacterized protein (62 aa).

Its subcellular location is the plastid. It is found in the chloroplast. This is an uncharacterized protein from Porphyra purpurea (Red seaweed).